Consider the following 509-residue polypeptide: uncharacterized protein (509 aa).

The protein belongs to the MG032/MG096/MG288 family.

This is an uncharacterized protein from Mycoplasma pneumoniae (strain ATCC 29342 / M129 / Subtype 1) (Mycoplasmoides pneumoniae).